The sequence spans 348 residues: GMP reductase (348 aa).

Residue alanine 108–alanine 131 participates in NADP(+) binding. Residues glycine 181 and glycine 183 each contribute to the K(+) site. The Thioimidate intermediate role is filled by cysteine 186. Isoleucine 216–valine 239 provides a ligand contact to NADP(+).

Belongs to the IMPDH/GMPR family. GuaC type 1 subfamily. Homotetramer.

It catalyses the reaction IMP + NH4(+) + NADP(+) = GMP + NADPH + 2 H(+). Its function is as follows. Catalyzes the irreversible NADPH-dependent deamination of GMP to IMP. It functions in the conversion of nucleobase, nucleoside and nucleotide derivatives of G to A nucleotides, and in maintaining the intracellular balance of A and G nucleotides. This Vibrio parahaemolyticus serotype O3:K6 (strain RIMD 2210633) protein is GMP reductase.